Reading from the N-terminus, the 346-residue chain is 3-dehydroquinate synthase (346 aa).

NAD(+) contacts are provided by residues 61–66, 95–99, 119–120, lysine 132, and lysine 141; these read DGEAYK, GVIGD, and TT. Zn(2+)-binding residues include glutamate 174, histidine 233, and histidine 250.

It belongs to the sugar phosphate cyclases superfamily. Dehydroquinate synthase family. NAD(+) serves as cofactor. It depends on Co(2+) as a cofactor. The cofactor is Zn(2+).

It is found in the cytoplasm. The catalysed reaction is 7-phospho-2-dehydro-3-deoxy-D-arabino-heptonate = 3-dehydroquinate + phosphate. It functions in the pathway metabolic intermediate biosynthesis; chorismate biosynthesis; chorismate from D-erythrose 4-phosphate and phosphoenolpyruvate: step 2/7. In terms of biological role, catalyzes the conversion of 3-deoxy-D-arabino-heptulosonate 7-phosphate (DAHP) to dehydroquinate (DHQ). The polypeptide is 3-dehydroquinate synthase (Wolinella succinogenes (strain ATCC 29543 / DSM 1740 / CCUG 13145 / JCM 31913 / LMG 7466 / NCTC 11488 / FDC 602W) (Vibrio succinogenes)).